The sequence spans 321 residues: Lipoyl synthase (321 aa).

[4Fe-4S] cluster is bound by residues cysteine 68, cysteine 73, cysteine 79, cysteine 94, cysteine 98, cysteine 101, and serine 308. The 218-residue stretch at 80–297 folds into the Radical SAM core domain; it reads FNHGTATFMI…KEIALELGFT (218 aa).

Belongs to the radical SAM superfamily. Lipoyl synthase family. It depends on [4Fe-4S] cluster as a cofactor.

It is found in the cytoplasm. It catalyses the reaction [[Fe-S] cluster scaffold protein carrying a second [4Fe-4S](2+) cluster] + N(6)-octanoyl-L-lysyl-[protein] + 2 oxidized [2Fe-2S]-[ferredoxin] + 2 S-adenosyl-L-methionine + 4 H(+) = [[Fe-S] cluster scaffold protein] + N(6)-[(R)-dihydrolipoyl]-L-lysyl-[protein] + 4 Fe(3+) + 2 hydrogen sulfide + 2 5'-deoxyadenosine + 2 L-methionine + 2 reduced [2Fe-2S]-[ferredoxin]. It participates in protein modification; protein lipoylation via endogenous pathway; protein N(6)-(lipoyl)lysine from octanoyl-[acyl-carrier-protein]: step 2/2. In terms of biological role, catalyzes the radical-mediated insertion of two sulfur atoms into the C-6 and C-8 positions of the octanoyl moiety bound to the lipoyl domains of lipoate-dependent enzymes, thereby converting the octanoylated domains into lipoylated derivatives. This chain is Lipoyl synthase, found in Vibrio atlanticus (strain LGP32) (Vibrio splendidus (strain Mel32)).